A 110-amino-acid chain; its full sequence is UPF0122 protein BCA_3946 (110 aa).

The protein belongs to the UPF0122 family.

In terms of biological role, might take part in the signal recognition particle (SRP) pathway. This is inferred from the conservation of its genetic proximity to ftsY/ffh. May be a regulatory protein. The protein is UPF0122 protein BCA_3946 of Bacillus cereus (strain 03BB102).